Here is a 384-residue protein sequence, read N- to C-terminus: UPF0496 protein At3g28310/At3g28320 (384 aa).

A coiled-coil region spans residues 184–215; that stretch reads QESLFDRVTETKERIAKEIEEVQKRISNVNTA. Helical transmembrane passes span 217-237 and 242-262; these read IVSHVVFGAAAFGYAAGCIAL and VGAPLGAGMVTLLPVIVVQWV. A coiled-coil region spans residues 264–361; it reads VNYVLNNSLE…TTKITEVCET (98 aa).

Belongs to the UPF0496 family.

The protein resides in the membrane. The polypeptide is UPF0496 protein At3g28310/At3g28320 (Arabidopsis thaliana (Mouse-ear cress)).